Reading from the N-terminus, the 131-residue chain is Class I hydrophobin POH2 (131 aa).

The N-terminal stretch at 1–21 is a signal peptide; that stretch reads MFFRTSSLFTTIVAFTVMAAA. 4 disulfide bridges follow: Cys50–Cys110, Cys57–Cys104, Cys58–Cys91, and Cys111–Cys124. Residues Asn115 and Asn128 are each glycosylated (N-linked (GlcNAc...) asparagine).

The protein belongs to the fungal hydrophobin family. Self-assembles to form functional amyloid fibrils called rodlets. Self-assembly into fibrillar rodlets occurs spontaneously at hydrophobic:hydrophilic interfaces and the rodlets further associate laterally to form amphipathic monolayers. As to expression, expressionn is switched off in the fruiting bodies but abundantly expressed in the vegetative mycelium of both monokaryon and dikaryon.

Its subcellular location is the secreted. It localises to the cell wall. Its function is as follows. Aerial growth, conidiation, and dispersal of filamentous fungi in the environment rely upon a capability of their secreting small amphipathic proteins called hydrophobins (HPBs) with low sequence identity. Class I can self-assemble into an outermost layer of rodlet bundles on aerial cell surfaces, conferring cellular hydrophobicity that supports fungal growth, development and dispersal; whereas Class II form highly ordered films at water-air interfaces through intermolecular interactions but contribute nothing to the rodlet structure. POH2 is a class I hydrophobin that causes a large drop in the water-surface tension, enabling hyphae to breach the interface and grow into the air, in both the primary and the secondary mycelium. In the latter mycelium POH2 maight also play a role in the emergence of fruiting bodies. Secreted POH2 could also play a role in facilitating lignin degradation. The sequence is that of Class I hydrophobin POH2 from Pleurotus ostreatus (Oyster mushroom).